A 617-amino-acid polypeptide reads, in one-letter code: V-type proton ATPase catalytic subunit A (617 aa).

Asp-2 is modified (N-acetylalanine). Phosphothreonine is present on Thr-136. Residue 250 to 257 participates in ATP binding; sequence GAFGCGKT. A Phosphoserine; by AMPK modification is found at Ser-384.

Belongs to the ATPase alpha/beta chains family. As to quaternary structure, V-ATPase is a heteromultimeric enzyme made up of two complexes: the ATP-hydrolytic V1 complex and the proton translocation V0 complex. The V1 complex consists of three catalytic AB heterodimers that form a heterohexamer, three peripheral stalks each consisting of EG heterodimers, one central rotor including subunits D and F, and the regulatory subunits C and H. The proton translocation complex V0 consists of the proton transport subunit a, a ring of proteolipid subunits c9c'', rotary subunit d, subunits e and f, and the accessory subunits ATP6AP1/Ac45 and ATP6AP2/PRR. Interacts with the V0 complex V-ATPase subunit a4 ATP6V0A4. Interacts with WFS1. Interacts with alpha-crystallin B chain/CRYAB and with MTOR, forming a ternary complex. (Microbial infection) Interacts with Rabies virus protein M; this interaction promotes virion uncoating. Post-translationally, phosphorylation at Ser-384 by AMPK down-regulates its enzyme activity. High expression in the skin.

The protein localises to the cytoplasm. It localises to the cytosol. Its subcellular location is the cytoplasmic vesicle. The protein resides in the secretory vesicle. It is found in the clathrin-coated vesicle membrane. The protein localises to the lysosome. The catalysed reaction is ATP + H2O + 4 H(+)(in) = ADP + phosphate + 5 H(+)(out). ATP hydrolysis occurs at the interface between the nucleotide-binding domains of subunits A and B. ATP hydrolysis triggers a conformational change in the subunits D and F, which induces a shift of subunit d. The c-ring is subsequently rotated and results in a continuous proton translocation across the membrane. In terms of biological role, catalytic subunit of the V1 complex of vacuolar(H+)-ATPase (V-ATPase), a multisubunit enzyme composed of a peripheral complex (V1) that hydrolyzes ATP and a membrane integral complex (V0) that translocates protons. V-ATPase is responsible for acidifying and maintaining the pH of intracellular compartments and in some cell types, is targeted to the plasma membrane, where it is responsible for acidifying the extracellular environment. In aerobic conditions, involved in intracellular iron homeostasis, thus triggering the activity of Fe(2+) prolyl hydroxylase (PHD) enzymes, and leading to HIF1A hydroxylation and subsequent proteasomal degradation. May play a role in neurite development and synaptic connectivity. (Microbial infection) Plays an important role in virion uncoating during Rabies virus replication after membrane fusion. Specifically, participates in the dissociation of incoming viral matrix M proteins uncoating through direct interaction. This chain is V-type proton ATPase catalytic subunit A (ATP6V1A), found in Homo sapiens (Human).